The chain runs to 362 residues: Chorismate synthase (362 aa).

NADP(+) is bound at residue Arg47. FMN is bound by residues 124 to 126, Gly286, 301 to 305, and Arg327; these read RSS and KPTAT.

Belongs to the chorismate synthase family. Homotetramer. It depends on FMNH2 as a cofactor.

The catalysed reaction is 5-O-(1-carboxyvinyl)-3-phosphoshikimate = chorismate + phosphate. It participates in metabolic intermediate biosynthesis; chorismate biosynthesis; chorismate from D-erythrose 4-phosphate and phosphoenolpyruvate: step 7/7. Functionally, catalyzes the anti-1,4-elimination of the C-3 phosphate and the C-6 proR hydrogen from 5-enolpyruvylshikimate-3-phosphate (EPSP) to yield chorismate, which is the branch point compound that serves as the starting substrate for the three terminal pathways of aromatic amino acid biosynthesis. This reaction introduces a second double bond into the aromatic ring system. The polypeptide is Chorismate synthase (Nostoc punctiforme (strain ATCC 29133 / PCC 73102)).